The primary structure comprises 217 residues: MKIFLDTANLEEIKTAADWGVIDGVTTNPTLVAKENVPFEKRIKEICEIVKGPVSAEVTALNWNEMIEEAKKLAEIDKHVVIKIPMTKDGLKATKVLSEENIAVNMTLIFSSAQALLAMKAGARYVSPFVGRLDDISSDGMKLIEEIVQIIENYDFRAEIIVASVRHPMHIVHAALIGADIVTVPFKVLQSMFNHPLTDIGIDRFMKDWKDYQNRTK.

Lys83 acts as the Schiff-base intermediate with substrate in catalysis.

It belongs to the transaldolase family. Type 3B subfamily.

The protein localises to the cytoplasm. It carries out the reaction D-sedoheptulose 7-phosphate + D-glyceraldehyde 3-phosphate = D-erythrose 4-phosphate + beta-D-fructose 6-phosphate. It functions in the pathway carbohydrate degradation; pentose phosphate pathway; D-glyceraldehyde 3-phosphate and beta-D-fructose 6-phosphate from D-ribose 5-phosphate and D-xylulose 5-phosphate (non-oxidative stage): step 2/3. Functionally, transaldolase is important for the balance of metabolites in the pentose-phosphate pathway. This Pseudothermotoga lettingae (strain ATCC BAA-301 / DSM 14385 / NBRC 107922 / TMO) (Thermotoga lettingae) protein is Probable transaldolase.